The chain runs to 329 residues: Mas-related G-protein coupled receptor member X2 (329 aa).

At 1 to 33 (MDPTTPAWRTESTTMNGNDQALPLLCGKEILIS) the chain is on the extracellular side. The chain crosses the membrane as a helical span at residues 34-54 (VFLILFIALVGLVGNGFVLWL). The Cytoplasmic segment spans residues 55-63 (LGFRMRRNA). Residues 64 to 84 (FSVYVLSLAGADFLFLCFQII) traverse the membrane as a helical segment. The Extracellular segment spans residues 85 to 96 (NCLVYLSNFFCS). Residues 97–117 (SSINFPSFFTTVMTCAYLAGL) form a helical membrane-spanning segment. The Cytoplasmic portion of the chain corresponds to 118–144 (SMLSTISTERCLSVLWPIWYRCRRPRH). Residues 145–165 (LSAVACVLLWALSLLLSILEG) traverse the membrane as a helical segment. The Extracellular segment spans residues 166–183 (KFCGLFGDGDSGWCQTFD). The chain crosses the membrane as a helical span at residues 184–204 (LITAAWLIFLFMVLCGSSLAL). The Cytoplasmic portion of the chain corresponds to 205–227 (LVRILCGSRGLPLTRLYLTILLT). Residues 228-248 (VLVFLLCGLPFGIQWFLILWI) traverse the membrane as a helical segment. Residues 249-263 (WKNSDVLFCHIHPVS) are Extracellular-facing. A helical membrane pass occupies residues 264-284 (VVLSSLNSSANPIIYFFVGSF). Residues 285 to 329 (RKQWQLQQPILKLALQRALQDIAEVDHSEGCFRQGTPEMSRSSLV) lie on the Cytoplasmic side of the membrane.

The protein belongs to the G-protein coupled receptor 1 family. Mas subfamily.

The protein localises to the cell membrane. Its function is as follows. Mast cell-specific receptor for basic secretagogues, i.e. cationic amphiphilic drugs, as well as endo- or exogenous peptides, consisting of a basic head group and a hydrophobic core. Recognizes and binds small molecules containing a cyclized tetrahydroisoquinoline (THIQ), such as non-steroidal neuromuscular blocking drugs (NMBDs), including tubocurarine and atracurium. In response to these compounds, mediates pseudo-allergic reactions characterized by histamine release, inflammation and airway contraction. In Gorilla gorilla gorilla (Western lowland gorilla), this protein is Mas-related G-protein coupled receptor member X2 (MRGPRX2).